A 294-amino-acid chain; its full sequence is NAD kinase (294 aa).

Asp74 (proton acceptor) is an active-site residue. Residues Asp74–Gly75, Arg79, Asn149–Glu150, Asp179, Thr190–Ser195, and Ala214 contribute to the NAD(+) site.

The protein belongs to the NAD kinase family. A divalent metal cation is required as a cofactor.

The protein localises to the cytoplasm. The catalysed reaction is NAD(+) + ATP = ADP + NADP(+) + H(+). Its function is as follows. Involved in the regulation of the intracellular balance of NAD and NADP, and is a key enzyme in the biosynthesis of NADP. Catalyzes specifically the phosphorylation on 2'-hydroxyl of the adenosine moiety of NAD to yield NADP. The sequence is that of NAD kinase from Flavobacterium johnsoniae (strain ATCC 17061 / DSM 2064 / JCM 8514 / BCRC 14874 / CCUG 350202 / NBRC 14942 / NCIMB 11054 / UW101) (Cytophaga johnsonae).